A 414-amino-acid polypeptide reads, in one-letter code: Carboxyl-terminal-processing protease (414 aa).

Positions 1-29 are cleaved as a signal peptide; the sequence is MLRKRLQAGLCSLLLVLVLVFGPMERAIA. In terms of domain architecture, PDZ spans 100-184; sequence YRSLKVSTSG…STVSLTVKSP (85 aa). Residues Ser310, Asp321, and Lys335 each act as charge relay system in the active site.

It belongs to the peptidase S41A family.

The protein localises to the cellular thylakoid lumen. It catalyses the reaction The enzyme shows specific recognition of a C-terminal tripeptide, Xaa-Yaa-Zaa, in which Xaa is preferably Ala or Leu, Yaa is preferably Ala or Tyr, and Zaa is preferably Ala, but then cleaves at a variable distance from the C-terminus. A typical cleavage is -Ala-Ala-|-Arg-Ala-Ala-Lys-Glu-Asn-Tyr-Ala-Leu-Ala-Ala.. Its function is as follows. Cleavage of the 16 C-terminal residues from the D1 precursor of photosystem II (PSII). This proteolytic processing is necessary to allow the light-driven assembly of the oxygen-evolving cluster (a tetranuclear manganese), which is responsible for photosynthetic water oxidation. The sequence is that of Carboxyl-terminal-processing protease (ctpA) from Picosynechococcus sp. (strain ATCC 27264 / PCC 7002 / PR-6) (Agmenellum quadruplicatum).